We begin with the raw amino-acid sequence, 360 residues long: Aminomethyltransferase (360 aa).

The protein belongs to the GcvT family. The glycine cleavage system is composed of four proteins: P, T, L and H.

The enzyme catalyses N(6)-[(R)-S(8)-aminomethyldihydrolipoyl]-L-lysyl-[protein] + (6S)-5,6,7,8-tetrahydrofolate = N(6)-[(R)-dihydrolipoyl]-L-lysyl-[protein] + (6R)-5,10-methylene-5,6,7,8-tetrahydrofolate + NH4(+). Functionally, the glycine cleavage system catalyzes the degradation of glycine. The protein is Aminomethyltransferase of Legionella pneumophila (strain Paris).